A 251-amino-acid polypeptide reads, in one-letter code: Sugar fermentation stimulation protein homolog (251 aa).

Belongs to the SfsA family.

The polypeptide is Sugar fermentation stimulation protein homolog (Yersinia pseudotuberculosis serotype O:1b (strain IP 31758)).